The primary structure comprises 301 residues: Zinc finger protein LEE1 (301 aa).

The disordered stretch occupies residues 1–25 (MDAFENMSVSNHPGGNARRNSQSAN). Residues 7 to 25 (MSVSNHPGGNARRNSQSAN) are compositionally biased toward polar residues. Phosphoserine is present on residues Ser-21 and Ser-30. C3H1-type zinc fingers lie at residues 87–114 (DYSH…HSPD) and 123–145 (PCKY…HVLP). Ser-282 is subject to Phosphoserine.

The sequence is that of Zinc finger protein LEE1 (LEE1) from Saccharomyces cerevisiae (strain ATCC 204508 / S288c) (Baker's yeast).